Here is a 335-residue protein sequence, read N- to C-terminus: GTPase Obg (335 aa).

The Obg domain occupies 1 to 158 (MFVDQITLEL…RLVELELKLI (158 aa)). In terms of domain architecture, OBG-type G spans 159–334 (ADIGLVGFPN…LYDLFKSKLS (176 aa)). GTP contacts are provided by residues 165 to 172 (GFPNAGKS), 190 to 194 (FTTLH), 215 to 218 (DIPG), 285 to 288 (NKID), and 315 to 317 (SGL). Positions 172 and 192 each coordinate Mg(2+).

This sequence belongs to the TRAFAC class OBG-HflX-like GTPase superfamily. OBG GTPase family. In terms of assembly, monomer. The cofactor is Mg(2+).

The protein localises to the cytoplasm. An essential GTPase which binds GTP, GDP and possibly (p)ppGpp with moderate affinity, with high nucleotide exchange rates and a fairly low GTP hydrolysis rate. Plays a role in control of the cell cycle, stress response, ribosome biogenesis and in those bacteria that undergo differentiation, in morphogenesis control. The chain is GTPase Obg from Chlamydia trachomatis serovar A (strain ATCC VR-571B / DSM 19440 / HAR-13).